Reading from the N-terminus, the 86-residue chain is Large ribosomal subunit protein bL31B (86 aa).

The protein belongs to the bacterial ribosomal protein bL31 family. Type B subfamily. In terms of assembly, part of the 50S ribosomal subunit.

In Ralstonia pickettii (strain 12J), this protein is Large ribosomal subunit protein bL31B.